We begin with the raw amino-acid sequence, 421 residues long: NADH-quinone oxidoreductase subunit F (421 aa).

Position 54–63 (54–63 (GRGGAGFSTG)) interacts with NAD(+). FMN is bound at residue 166–213 (GAGAYICGEETALLESLEGKKGMPRLKPPFPAGFGLYGCPTTINNVES). [4Fe-4S] cluster is bound by residues cysteine 344, cysteine 347, cysteine 350, and cysteine 390.

Belongs to the complex I 51 kDa subunit family. It depends on FMN as a cofactor. [4Fe-4S] cluster is required as a cofactor.

The enzyme catalyses a quinone + NADH + 5 H(+)(in) = a quinol + NAD(+) + 4 H(+)(out). NDH-1 shuttles electrons from NADH, via FMN and iron-sulfur (Fe-S) centers, to quinones in the respiratory chain. Couples the redox reaction to proton translocation (for every two electrons transferred, four hydrogen ions are translocated across the cytoplasmic membrane), and thus conserves the redox energy in a proton gradient. The protein is NADH-quinone oxidoreductase subunit F (nuoF) of Rickettsia typhi (strain ATCC VR-144 / Wilmington).